The following is an 83-amino-acid chain: Delta-conotoxin-like MVIC (83 aa).

An N-terminal signal peptide occupies residues 1–22 (MKLTCVMIVAVLFLTTWTFVTA). Positions 23–49 (DDSRYGLKNLFPKARHEMKNPEASKLN) are excised as a propeptide. Disulfide bonds link C54–C69, C61–C73, and C68–C78. 4-hydroxyproline occurs at positions 56 and 65.

This sequence belongs to the conotoxin O1 superfamily. In terms of tissue distribution, expressed by the venom duct.

It localises to the secreted. Delta-conotoxins bind to site 6 of voltage-gated sodium channels (Nav) and inhibit the inactivation process. This chain is Delta-conotoxin-like MVIC, found in Conus magus (Magical cone).